The following is a 122-amino-acid chain: Ferredoxin (122 aa).

Residues 1 to 33 (MSHDRRLTVGSLLPNQPRPVAVPKAPSVVQPSK) are disordered. The tract at residues 8–14 (TVGSLLP) is targeting peptide. Residues 40 to 122 (AIIRLEQNGR…FRLACQANME (83 aa)) form the 2Fe-2S ferredoxin-type domain. 4 residues coordinate [2Fe-2S] cluster: C75, C80, C83, and C117.

The protein belongs to the 2Fe2S plant-type ferredoxin family. [2Fe-2S] cluster is required as a cofactor.

The protein localises to the encapsulin nanocompartment. Functionally, cargo protein of a type 1 encapsulin nanocompartment. An iron-binding protein probably involved in iron mineralization in the encapsulin nanocompartment. 2 different cargo proteins have been identified (IMEF and Fer); when both are expressed in E.coli with the shell protein only IMEF is detected within the nanocompartment. E.coli expressing all 3 genes stores the largest amount of iron and is protected from Fe/H2O2-induced oxidative stress. In Bacillus thermotolerans (Quasibacillus thermotolerans), this protein is Ferredoxin.